Reading from the N-terminus, the 213-residue chain is Phosphate-specific transport system accessory protein PhoU homolog 2 (213 aa).

This sequence belongs to the PhoU family. Homodimer.

It is found in the cytoplasm. Its function is as follows. Plays a role in the regulation of phosphate uptake. In this role, it may bind, possibly as a chaperone, to PhoR, PhoP or a PhoR-PhoP complex to promote dephosphorylation of phospho-PhoP, or inhibit formation of the PhoR-PhoP transitory complex. This is Phosphate-specific transport system accessory protein PhoU homolog 2 (phoU2) from Mycobacterium bovis (strain ATCC BAA-935 / AF2122/97).